We begin with the raw amino-acid sequence, 530 residues long: B3 domain-containing protein REM-like 3 (530 aa).

2 consecutive DNA-binding regions (TF-B3) follow at residues lysine 11–serine 103 and aspartate 144–glutamate 241. A disordered region spans residues serine 251 to lysine 276. Residues valine 254–lysine 276 are compositionally biased toward basic and acidic residues. DNA-binding regions (TF-B3) lie at residues asparagine 296–glutamate 393 and serine 431–lysine 530.

The protein localises to the nucleus. This is B3 domain-containing protein REM-like 3 from Arabidopsis thaliana (Mouse-ear cress).